The chain runs to 342 residues: GTPase Obg (342 aa).

Positions 1-159 (MQFIDQAQIE…KLLRLELKLL (159 aa)) constitute an Obg domain. In terms of domain architecture, OBG-type G spans 160 to 330 (AEVGIIGLPN…MLQEVWGILD (171 aa)). Residues 166 to 173 (GLPNAGKS), 191 to 195 (FTTLI), 213 to 216 (DIPG), 280 to 283 (NKID), and 311 to 313 (SAV) contribute to the GTP site. The Mg(2+) site is built by Ser173 and Thr193.

Belongs to the TRAFAC class OBG-HflX-like GTPase superfamily. OBG GTPase family. Monomer. Mg(2+) is required as a cofactor.

Its subcellular location is the cytoplasm. In terms of biological role, an essential GTPase which binds GTP, GDP and possibly (p)ppGpp with moderate affinity, with high nucleotide exchange rates and a fairly low GTP hydrolysis rate. Plays a role in control of the cell cycle, stress response, ribosome biogenesis and in those bacteria that undergo differentiation, in morphogenesis control. The protein is GTPase Obg of Trichormus variabilis (strain ATCC 29413 / PCC 7937) (Anabaena variabilis).